A 204-amino-acid chain; its full sequence is MGGTFDPIHHGHLVAASEVADLFDLDEVVFVPTGQPWQKHDRRVTAPEDRYLMTVIATASNPRFSVSRVDIDRGGPTYTKDTLRDLHELNPDADLYFITGADALGSILSWQNWEEMFSIARFVGVSRPGYELDGKHISAALRELPADALSLVEVPALAISSSDCRKRAVEARPIWYLVPDGVVQYVTKRRLYLPEPTPELRTPE.

This sequence belongs to the NadD family.

The enzyme catalyses nicotinate beta-D-ribonucleotide + ATP + H(+) = deamido-NAD(+) + diphosphate. The protein operates within cofactor biosynthesis; NAD(+) biosynthesis; deamido-NAD(+) from nicotinate D-ribonucleotide: step 1/1. Functionally, catalyzes the reversible adenylation of nicotinate mononucleotide (NaMN) to nicotinic acid adenine dinucleotide (NaAD). In Mycobacterium sp. (strain JLS), this protein is Probable nicotinate-nucleotide adenylyltransferase.